Here is a 418-residue protein sequence, read N- to C-terminus: Homocitrate synthase, mitochondrial (418 aa).

Over residues 1–10 (MSVSEANGTE) the composition is skewed to polar residues. Residues 1 to 25 (MSVSEANGTETIKPPMNGNPYGPNP) form a disordered region. Over residues 14-25 (PPMNGNPYGPNP) the composition is skewed to low complexity. A Pyruvate carboxyltransferase domain is found at 35 to 288 (FSIIESTLRE…THKYKLNQLR (254 aa)). Residues R43, E44, and H103 each coordinate 2-oxoglutarate. Position 44 (E44) interacts with L-lysine. Residue E44 coordinates Zn(2+). Position 123 (D123) interacts with L-lysine. 2-oxoglutarate-binding residues include R163, S165, T197, H224, and H226. An L-lysine-binding site is contributed by T197. The Zn(2+) site is built by H224 and H226. H321 functions as the Proton acceptor in the catalytic mechanism.

The protein belongs to the alpha-IPM synthase/homocitrate synthase family. Homocitrate synthase LYS20/LYS21 subfamily. Mg(2+) serves as cofactor. The cofactor is Mn(2+). Zn(2+) is required as a cofactor. It depends on Co(2+) as a cofactor.

It localises to the mitochondrion. It catalyses the reaction acetyl-CoA + 2-oxoglutarate + H2O = (2R)-homocitrate + CoA + H(+). It participates in amino-acid biosynthesis; L-lysine biosynthesis via AAA pathway; L-alpha-aminoadipate from 2-oxoglutarate: step 1/5. With respect to regulation, the activity is controled by feedback inhibition by L-lysine, the final product of the pathway that acts as a competitive inhibitor of 2-oxoglutarate. Its function is as follows. Catalyzes the aldol-type condensation of 2-oxoglutarate with acetyl-CoA to yield homocitrate, the first step of the alpha-aminoadipate (AAA) lysine biosynthesis pathway. This Schizosaccharomyces pombe (strain 972 / ATCC 24843) (Fission yeast) protein is Homocitrate synthase, mitochondrial.